The chain runs to 376 residues: Immunoglobulin G-binding protein H (376 aa).

A signal peptide spans 1-41; sequence MTRQQTKKNYSLRKLKTGTASVAVALTVLGAGFANQTTVKA. A disordered region spans residues 69 to 271; that stretch reads TSLENEKLKS…AAKKELEANH (203 aa). Composition is skewed to basic and acidic residues over residues 72-146, 156-203, 211-245, and 253-271; these read ENEK…KRYQ, ETEK…DKQI, LSRDLEASRAAKKELEANHQKLEAEHQKLKEDKQI, and LSRDLEASRAAKKELEANH. C repeat units follow at residues 153–187, 195–229, and 237–271; these read QQLETEKQISEASRKSLSRDLEASRAAKKDLEAEH and QKLKEDKQISDASRQGLSRDLEASRAAKKELEANH. 4 D repeats span residues 272–277, 278–283, 286–291, and 293–298; these read QKLEAE, AKALKE, AKQAEE, and AKLRAG. A disordered region spans residues 292 to 348; the sequence is LAKLRAGKASDSQTPDTKPGNKAVPGKGQAPQAGTKPNQNKAPMKETKRQLPSTGET. The LPXTG sorting signal signature appears at 342–346; the sequence is LPSTG. Thr-345 carries the pentaglycyl murein peptidoglycan amidated threonine modification. The propeptide at 346–376 is removed by sortase; the sequence is GETANPFFTAAALTVMATAGVAAVVKRKEEN.

It belongs to the M protein family.

It localises to the secreted. It is found in the cell wall. The polypeptide is Immunoglobulin G-binding protein H (Streptococcus pyogenes serotype M1).